We begin with the raw amino-acid sequence, 346 residues long: MNPLIFTTILMTVLLGTMIVMMSSHWLMIWIGFEMNLLAIIPILMKKYNPRTMEASTKYFLTQATASMLLMMAIIINLMHSGQWTITKVFNPTASIIMTSALAMKLGLTPFHFWVPEVTQGISLTSGLILLTWQKLAPMSILYQISPSINLNILLTMAVLSILVGGWGGLNQTQLRKIMAYSSIAHMGWMTAVLVYNPTLTMLNMLIYIMMTLTMFMLFIHSSSTTTLSLSHTWNKMPLTTTLILITLLSMGGLPPLSGFMPKWMIIQELTKNSSIILPTLMAIMALLNLYFYMRLTYSTSLTMFPSTNNMKMKWQFETKRITLLPPLIVMSSLLLPLTPMLSILD.

Helical transmembrane passes span 3-23 (PLIFTTILMTVLLGTMIVMMS), 25-45 (HWLMIWIGFEMNLLAIIPILM), 59-79 (YFLTQATASMLLMMAIIINLM), 96-116 (IIMTSALAMKLGLTPFHFWVP), 122-142 (ISLTSGLILLTWQKLAPMSIL), 149-169 (INLNILLTMAVLSILVGGWGG), 178-198 (IMAYSSIAHMGWMTAVLVYNP), 200-220 (LTMLNMLIYIMMTLTMFMLFI), 242-262 (TLILITLLSMGGLPPLSGFMP), 274-294 (SSIILPTLMAIMALLNLYFYM), and 322-342 (ITLLPPLIVMSSLLLPLTPML).

The protein belongs to the complex I subunit 2 family. In terms of assembly, core subunit of respiratory chain NADH dehydrogenase (Complex I) which is composed of 45 different subunits. Interacts with TMEM242.

The protein localises to the mitochondrion inner membrane. It carries out the reaction a ubiquinone + NADH + 5 H(+)(in) = a ubiquinol + NAD(+) + 4 H(+)(out). Core subunit of the mitochondrial membrane respiratory chain NADH dehydrogenase (Complex I) which catalyzes electron transfer from NADH through the respiratory chain, using ubiquinone as an electron acceptor. Essential for the catalytic activity and assembly of complex I. In Equus caballus (Horse), this protein is NADH-ubiquinone oxidoreductase chain 2.